We begin with the raw amino-acid sequence, 838 residues long: Ribonuclease Z (838 aa).

Ser-824 bears the Phosphoserine mark.

This sequence belongs to the RNase Z family. As to quaternary structure, homodimer. Zn(2+) serves as cofactor.

Its subcellular location is the cytoplasm. It localises to the nucleus. The enzyme catalyses Endonucleolytic cleavage of RNA, removing extra 3' nucleotides from tRNA precursor, generating 3' termini of tRNAs. A 3'-hydroxy group is left at the tRNA terminus and a 5'-phosphoryl group is left at the trailer molecule.. Its function is as follows. Zinc phosphodiesterase, which displays some tRNA 3'-processing endonuclease activity. Probably involved in tRNA maturation, by removing a 3'-trailer from precursor tRNA. In Saccharomyces cerevisiae (strain ATCC 204508 / S288c) (Baker's yeast), this protein is Ribonuclease Z (TRZ1).